The primary structure comprises 468 residues: Adenylosuccinate synthetase (468 aa).

GTP contacts are provided by residues 23-29 (GDEGKGK) and 51-53 (GHE). Asp24 serves as the catalytic Proton acceptor. Mg(2+)-binding residues include Asp24 and Gly51. Residues 24–27 (DEGK), 49–52 (NSGH), Thr142, Arg156, Asn238, Thr253, and Arg317 contribute to the IMP site. The active-site Proton donor is the His52. A substrate-binding site is contributed by 313–319 (VTTGRTR). GTP contacts are provided by residues Arg319 and 345–347 (KLD).

It belongs to the adenylosuccinate synthetase family. In terms of assembly, homodimer. Mg(2+) is required as a cofactor.

Its subcellular location is the cytoplasm. It catalyses the reaction IMP + L-aspartate + GTP = N(6)-(1,2-dicarboxyethyl)-AMP + GDP + phosphate + 2 H(+). It participates in purine metabolism; AMP biosynthesis via de novo pathway; AMP from IMP: step 1/2. Plays an important role in the salvage pathway for purine nucleotide biosynthesis. Catalyzes the first committed step in the biosynthesis of AMP from IMP. The polypeptide is Adenylosuccinate synthetase (Theileria annulata).